The chain runs to 397 residues: Xyloglucan O-acetyltransferase 3 (397 aa).

The Cytoplasmic segment spans residues 1-3 (MNR). The chain crosses the membrane as a helical; Signal-anchor for type II membrane protein span at residues 4-24 (FFYTVGLIFLFSFFILYSPKT). The Lumenal segment spans residues 25-397 (SDLSNNVDLH…RHAFTDFTWS (373 aa)). Cystine bridges form between cysteine 48/cysteine 98, cysteine 69/cysteine 134, cysteine 78/cysteine 370, and cysteine 293/cysteine 366. The N-linked (GlcNAc...) asparagine glycan is linked to asparagine 66. Residues 121–123 (GDS) carry the GDS motif motif. Serine 123 (nucleophile) is an active-site residue. Asparagine 162, asparagine 182, and asparagine 294 each carry an N-linked (GlcNAc...) asparagine glycan. Aspartate 365 functions as the Proton donor in the catalytic mechanism. Residues 365–368 (DCVH) carry the DXXH motif motif. The active-site Proton acceptor is the histidine 368.

This sequence belongs to the PC-esterase family. TBL subfamily.

It localises to the golgi apparatus membrane. In terms of biological role, xyloglucan acetyltransferase that catalyzes the acetylation of fucosylated Gal residues on xyloglucan side chains. Predominantly catalyze 6-O-monoacetylation of Gal residues in the Fuc-Gal-Xyl trisaccharide side chains of xyloglucan oligomers. This Populus trichocarpa (Western balsam poplar) protein is Xyloglucan O-acetyltransferase 3.